The chain runs to 954 residues: Valine--tRNA ligase (954 aa).

The 'HIGH' region signature appears at 48 to 58; the sequence is PNVTGSLHMGH. Positions 560–564 match the 'KMSKS' region motif; that stretch reads KMSKS. Lysine 563 contributes to the ATP binding site. The stretch at 883-953 forms a coiled coil; it reads AGFINKEAEL…IQEQYKAIEA (71 aa).

This sequence belongs to the class-I aminoacyl-tRNA synthetase family. ValS type 1 subfamily. In terms of assembly, monomer.

The protein localises to the cytoplasm. It catalyses the reaction tRNA(Val) + L-valine + ATP = L-valyl-tRNA(Val) + AMP + diphosphate. Its function is as follows. Catalyzes the attachment of valine to tRNA(Val). As ValRS can inadvertently accommodate and process structurally similar amino acids such as threonine, to avoid such errors, it has a 'posttransfer' editing activity that hydrolyzes mischarged Thr-tRNA(Val) in a tRNA-dependent manner. The protein is Valine--tRNA ligase of Haemophilus influenzae (strain PittEE).